A 327-amino-acid polypeptide reads, in one-letter code: Beta-ketoacyl-[acyl-carrier-protein] synthase III 2 (327 aa).

Residues cysteine 114 and histidine 251 contribute to the active site. The ACP-binding stretch occupies residues serine 252–arginine 256. Asparagine 281 is a catalytic residue.

This sequence belongs to the thiolase-like superfamily. FabH family. In terms of assembly, homodimer.

The protein resides in the cytoplasm. The catalysed reaction is malonyl-[ACP] + acetyl-CoA + H(+) = 3-oxobutanoyl-[ACP] + CO2 + CoA. It participates in lipid metabolism; fatty acid biosynthesis. In terms of biological role, catalyzes the condensation reaction of fatty acid synthesis by the addition to an acyl acceptor of two carbons from malonyl-ACP. Catalyzes the first condensation reaction which initiates fatty acid synthesis and may therefore play a role in governing the total rate of fatty acid production. Possesses both acetoacetyl-ACP synthase and acetyl transacylase activities. Its substrate specificity determines the biosynthesis of branched-chain and/or straight-chain of fatty acids. This chain is Beta-ketoacyl-[acyl-carrier-protein] synthase III 2, found in Bacillus anthracis.